We begin with the raw amino-acid sequence, 214 residues long: Small ribosomal subunit protein eS6 (214 aa).

Belongs to the eukaryotic ribosomal protein eS6 family.

This is Small ribosomal subunit protein eS6 from Saccharolobus islandicus (strain L.S.2.15 / Lassen #1) (Sulfolobus islandicus).